Here is a 331-residue protein sequence, read N- to C-terminus: Light-harvesting complex I LH35 proteins (331 aa).

It localises to the plastid. The protein localises to the chloroplast. The chain is Light-harvesting complex I LH35 proteins from Euglena gracilis.